Consider the following 544-residue polypeptide: Intercellular adhesion molecule 3 (544 aa).

The N-terminal stretch at 1 to 31 (MIASGPPPRVYWTSLIFLLLACCLLPTGAQG) is a signal peptide. At 32 to 486 (QTYQVRVEPK…MMDVQGRNPV (455 aa)) the chain is on the extracellular side. The Ig-like C2-type 1 domain occupies 48–105 (GEPLVVNCTLDCPGPGLISLETALSKEPHSRGLGWAAFRLTNVTGDMEILCSGICNKS). Asn54, Asn89, Asn103, Asn112, Asn138, Asn190, Asn209, Asn243, Asn267, Asn296, Asn321, and Asn326 each carry an N-linked (GlcNAc...) asparagine glycan. 2 disulfides stabilise this stretch: Cys55–Cys98 and Cys59–Cys102. One can recognise an Ig-like C2-type 2 domain in the interval 134-200 (GEELNLSCLV…FSCRSELDLR (67 aa)). Cysteines 141 and 193 form a disulfide. The region spanning 237-302 (ETSWPVNCSL…IVCNVTLGVE (66 aa)) is the Ig-like C2-type 3 domain. Cys244 and Cys295 are disulfide-bonded. One can recognise an Ig-like C2-type 4 domain in the interval 330–383 (GTPVTVTCAAGPQVQVMLDGVPAAVPGQPAQLQLKATEMDDRRTFFCNATLKVH). Cys337 and Cys376 are oxidised to a cystine. N-linked (GlcNAc...) asparagine glycans are attached at residues Asn377, Asn390, and Asn456. An Ig-like C2-type 5 domain is found at 417–470 (KTMHILQCQARGNPNPQLQCLREGSKFKVPVGIPFLVLLNYSGTYSCQAASSRG). Residues Cys424 and Cys463 are joined by a disulfide bond. Residues 487–511 (TINIVLGVLAILGLVTLAAASVYVF) form a helical membrane-spanning segment. Residues 512 to 544 (WVQRQHDIYHLTPRSTRWRLTSTQPVTVAEELS) lie on the Cytoplasmic side of the membrane.

This sequence belongs to the immunoglobulin superfamily. ICAM family. As to quaternary structure, interacts with moesin/MSN. As to expression, leukocytes.

The protein localises to the membrane. Functionally, ICAM proteins are ligands for the leukocyte adhesion protein LFA-1 (integrin alpha-L/beta-2). ICAM3 is also a ligand for integrin alpha-D/beta-2. In association with integrin alpha-L/beta-2, contributes to apoptotic neutrophil phagocytosis by macrophages. The chain is Intercellular adhesion molecule 3 (ICAM3) from Bos taurus (Bovine).